Here is a 417-residue protein sequence, read N- to C-terminus: MSHWATFKQTATNLWVTLRHDILALAVFLNGLLIFKTIYGMSVNLLDIFHIKAFSELDLSLLANAPLFMLGVFLVLNSIGLLFRAKLAWAISIILLLIALIYTLHFYPWLKFSIGFCIFTLVFLLILRKDFSHSSAAAGTIFAFISFTTLLFYSTYGALYLSEGFNPRIESLMTAFYFSIETMSTVGYGDIVPVSESARLFTISVIISGITVFATSMTSIFGPLIRGGFNKLVKGNNHTMHRKDHFIVCGHSILAINTILQLNQRGQNVTVISNLPEDDIKQLEQRLGDNADVIPGDSNDSSVLKKAGIDRCRAILALSDNDADNAFVVLSAKDMSSDVKTVLAVSDSKNLNKIKMVHPDIILSPQLFGSEILARVLNGEEINNDMLVSMLLNSGHGIFSDNDELETKADSKESAQK.

Over 1–21 the chain is Cytoplasmic; sequence MSHWATFKQTATNLWVTLRHD. A helical membrane pass occupies residues 22–41; that stretch reads ILALAVFLNGLLIFKTIYGM. The Periplasmic segment spans residues 42–63; that stretch reads SVNLLDIFHIKAFSELDLSLLA. The chain crosses the membrane as a helical span at residues 64 to 83; sequence NAPLFMLGVFLVLNSIGLLF. The Cytoplasmic portion of the chain corresponds to 84–86; sequence RAK. A helical membrane pass occupies residues 87 to 104; it reads LAWAISIILLLIALIYTL. Residues 105–110 lie on the Periplasmic side of the membrane; sequence HFYPWL. A helical membrane pass occupies residues 111–127; it reads KFSIGFCIFTLVFLLIL. The Cytoplasmic segment spans residues 128 to 140; sequence RKDFSHSSAAAGT. A helical membrane pass occupies residues 141 to 160; the sequence is IFAFISFTTLLFYSTYGALY. The Periplasmic segment spans residues 161-199; that stretch reads LSEGFNPRIESLMTAFYFSIETMSTVGYGDIVPVSESAR. The Selectivity filter motif lies at 185 to 190; the sequence is TVGYGD. A helical membrane pass occupies residues 200-220; sequence LFTISVIISGITVFATSMTSI. The Cytoplasmic portion of the chain corresponds to 221–417; it reads FGPLIRGGFN…KADSKESAQK (197 aa). The RCK N-terminal domain maps to 243–363; the sequence is KDHFIVCGHS…IKMVHPDIIL (121 aa).

The protein belongs to the potassium channel family. In terms of assembly, dimer.

It is found in the cell inner membrane. Functionally, k(+)-specific ion channel. May play a role in the defense against osmotic shock. The polypeptide is Voltage-gated potassium channel Kch (kch) (Escherichia coli (strain K12)).